Here is a 277-residue protein sequence, read N- to C-terminus: Proteasome subunit beta type-7 (277 aa).

A propeptide spans 1-43 (MAAVSVFQAPVGGFSFDNCRRNAVLEADFAKKGFKLPKARKTG) (removed in mature form). Thr-44 serves as the catalytic Nucleophile.

It belongs to the peptidase T1B family. As to quaternary structure, the 26S proteasome consists of a 20S proteasome core and two 19S regulatory subunits. The 20S proteasome core is a barrel-shaped complex made of 28 subunits that are arranged in four stacked rings. The two outer rings are each formed by seven alpha subunits, and the two inner rings are formed by seven beta subunits. The proteolytic activity is exerted by three beta-subunits PSMB5, PSMB6 and PSMB7.

It localises to the cytoplasm. Its subcellular location is the nucleus. It catalyses the reaction Cleavage of peptide bonds with very broad specificity.. Its function is as follows. Component of the 20S core proteasome complex involved in the proteolytic degradation of most intracellular proteins. This complex plays numerous essential roles within the cell by associating with different regulatory particles. Associated with two 19S regulatory particles, forms the 26S proteasome and thus participates in the ATP-dependent degradation of ubiquitinated proteins. The 26S proteasome plays a key role in the maintenance of protein homeostasis by removing misfolded or damaged proteins that could impair cellular functions, and by removing proteins whose functions are no longer required. Associated with the PA200 or PA28, the 20S proteasome mediates ubiquitin-independent protein degradation. This type of proteolysis is required in several pathways including spermatogenesis (20S-PA200 complex) or generation of a subset of MHC class I-presented antigenic peptides (20S-PA28 complex). Within the 20S core complex, PSMB7 displays a trypsin-like activity. The protein is Proteasome subunit beta type-7 (Psmb7) of Rattus norvegicus (Rat).